The following is a 113-amino-acid chain: Putative increased recombination centers protein 14 (113 aa).

The sequence is that of Putative increased recombination centers protein 14 (IRC14) from Saccharomyces cerevisiae (strain ATCC 204508 / S288c) (Baker's yeast).